The primary structure comprises 123 residues: Ribosome-binding factor A (123 aa).

It belongs to the RbfA family. In terms of assembly, monomer. Binds 30S ribosomal subunits, but not 50S ribosomal subunits or 70S ribosomes.

Its subcellular location is the cytoplasm. One of several proteins that assist in the late maturation steps of the functional core of the 30S ribosomal subunit. Associates with free 30S ribosomal subunits (but not with 30S subunits that are part of 70S ribosomes or polysomes). Required for efficient processing of 16S rRNA. May interact with the 5'-terminal helix region of 16S rRNA. This is Ribosome-binding factor A from Delftia acidovorans (strain DSM 14801 / SPH-1).